The primary structure comprises 481 residues: UDP-glycosyltransferase 73B3 (481 aa).

Histidine 21 (proton acceptor) is an active-site residue. Histidine 21 contacts an anthocyanidin. Catalysis depends on aspartate 132, which acts as the Charge relay. UDP-alpha-D-glucose is bound by residues alanine 355, glutamine 357, histidine 372, tryptophan 375, asparagine 376, serine 377, and glutamate 380. Alanine 395 lines the an anthocyanidin pocket. Residues glutamate 396 and glutamine 397 each contribute to the UDP-alpha-D-glucose site.

This sequence belongs to the UDP-glycosyltransferase family. As to expression, expressed in roots and flowers.

The catalysed reaction is a flavonol + UDP-alpha-D-glucose = a flavonol 3-O-beta-D-glucoside + UDP + H(+). Functionally, possesses quercetin 3-O-glucosyltransferase activity in vitro. Also active in vitro on benzoates and benzoate derivatives. Involved in stress or defense responses. The sequence is that of UDP-glycosyltransferase 73B3 (UGT73B3) from Arabidopsis thaliana (Mouse-ear cress).